The sequence spans 90 residues: WAP four-disulfide core domain protein 12 (90 aa).

Positions 1-23 are cleaved as a signal peptide; it reads MGSSSFLVLMVSLALVTLVAVEG. The WAP domain occupies 27 to 74; it reads GIEKAGVCPADNVRCFKSDPPQCHTDQDCLGERKCCYLHCGFKCVIPV. Intrachain disulfides connect Cys34–Cys62, Cys41–Cys66, Cys49–Cys61, and Cys55–Cys70.

It is found in the secreted. Functionally, antibacterial protein. Putative acid-stable proteinase inhibitor. The polypeptide is WAP four-disulfide core domain protein 12 (WFDC12) (Pongo abelii (Sumatran orangutan)).